The sequence spans 173 residues: Co-chaperone protein HscB homolog (173 aa).

The 73-residue stretch at 5 to 77 (CHFALFDLQP…SQRARYLLAL (73 aa)) folds into the J domain.

Belongs to the HscB family. As to quaternary structure, interacts with HscA and stimulates its ATPase activity.

Functionally, co-chaperone involved in the maturation of iron-sulfur cluster-containing proteins. Seems to help targeting proteins to be folded toward HscA. The sequence is that of Co-chaperone protein HscB homolog from Ectopseudomonas mendocina (strain ymp) (Pseudomonas mendocina).